Reading from the N-terminus, the 531-residue chain is Peptide chain release factor 3 (531 aa).

In terms of domain architecture, tr-type G spans 10-278 (RRRRTFAIIS…SLIDWAPAPK (269 aa)). Residues 19–26 (SHPDAGKT), 87–91 (DTPGH), and 141–144 (NKYD) each bind GTP.

This sequence belongs to the TRAFAC class translation factor GTPase superfamily. Classic translation factor GTPase family. PrfC subfamily.

It localises to the cytoplasm. Its function is as follows. Increases the formation of ribosomal termination complexes and stimulates activities of RF-1 and RF-2. It binds guanine nucleotides and has strong preference for UGA stop codons. It may interact directly with the ribosome. The stimulation of RF-1 and RF-2 is significantly reduced by GTP and GDP, but not by GMP. This Neisseria gonorrhoeae (strain ATCC 700825 / FA 1090) protein is Peptide chain release factor 3.